The chain runs to 328 residues: GMP reductase (328 aa).

Cys176 (thioimidate intermediate) is an active-site residue. 205–228 (IIADGGIRTHGDIAKSIRFGASMI) is a binding site for NADP(+).

Belongs to the IMPDH/GMPR family. GuaC type 2 subfamily.

The catalysed reaction is IMP + NH4(+) + NADP(+) = GMP + NADPH + 2 H(+). Functionally, catalyzes the irreversible NADPH-dependent deamination of GMP to IMP. It functions in the conversion of nucleobase, nucleoside and nucleotide derivatives of G to A nucleotides, and in maintaining the intracellular balance of A and G nucleotides. The protein is GMP reductase of Streptococcus pneumoniae (strain ATCC 700669 / Spain 23F-1).